The following is a 392-amino-acid chain: Succinate--CoA ligase [ADP-forming] subunit beta (392 aa).

Residues 9–247 enclose the ATP-grasp domain; that stretch reads KEILRVCGVP…LYEEDPKEIE (239 aa). ATP contacts are provided by residues Lys49, 56–58, Glu102, Gln105, and Glu110; that span reads GRG. Positions 202 and 216 each coordinate Mg(2+). Substrate is bound by residues Asn267 and 324 to 326; that span reads GIM.

This sequence belongs to the succinate/malate CoA ligase beta subunit family. As to quaternary structure, heterotetramer of two alpha and two beta subunits. The cofactor is Mg(2+).

It catalyses the reaction succinate + ATP + CoA = succinyl-CoA + ADP + phosphate. The catalysed reaction is GTP + succinate + CoA = succinyl-CoA + GDP + phosphate. The protein operates within carbohydrate metabolism; tricarboxylic acid cycle; succinate from succinyl-CoA (ligase route): step 1/1. Functionally, succinyl-CoA synthetase functions in the citric acid cycle (TCA), coupling the hydrolysis of succinyl-CoA to the synthesis of either ATP or GTP and thus represents the only step of substrate-level phosphorylation in the TCA. The beta subunit provides nucleotide specificity of the enzyme and binds the substrate succinate, while the binding sites for coenzyme A and phosphate are found in the alpha subunit. This Neorickettsia sennetsu (strain ATCC VR-367 / Miyayama) (Ehrlichia sennetsu) protein is Succinate--CoA ligase [ADP-forming] subunit beta.